A 320-amino-acid chain; its full sequence is Protein phosphatase PTC7 homolog fig (320 aa).

One can recognise a PPM-type phosphatase domain in the interval 49 to 315 (PYLVTAVQGR…DDITLILASV (267 aa)). Residues Asp93, Gly94, and Asp238 each coordinate Mn(2+).

This sequence belongs to the PP2C family. The cofactor is Mg(2+). It depends on Mn(2+) as a cofactor.

It carries out the reaction O-phospho-L-seryl-[protein] + H2O = L-seryl-[protein] + phosphate. The catalysed reaction is O-phospho-L-threonyl-[protein] + H2O = L-threonyl-[protein] + phosphate. The polypeptide is Protein phosphatase PTC7 homolog fig (Drosophila yakuba (Fruit fly)).